The primary structure comprises 484 residues: MKFIVKLYPEIMIKSKPVRMRFTKMLESNIRNVLKKIDEDAKVQRQWDKIMVKVPKDKPELTELFAERLAHIPGIHHVLQVAEYDFETVDDIYQLALPVYRDMLKDKTFCVRVKRAGQHDFNSIEVERYVGGGLNQFTEAKGVQLKNPDVTIQLEIDRDKLYMVSQRIEGLGGFPIAAQEDVLSLISGGFDSGVASFQFIKKGSRTHYCFFNLGGAQHEIGVKQVAYHLWKTYGESHKVKFVSVPFEEVVTEILERIENGQMGVVLKRMMMRAATRVAERMGIQALVTGESLGQVSSQTLTNLNVIDRSTDLLILRPLISMDKPDIIREARRIGTEDFAASMPEYCGVISQRPTVKAVLSKVEAEEQKFSEDLLDRVLAKAEVIDIRDIAVATSERVTETETVSSAAGNEVIIDIRAPEEEESRPLDVDGVEVKVIPFFKLATAFAELDKDKTYLLYCERGVMSKLQALYLQEQGYNNVKVYRP.

The 105-residue stretch at 63-167 folds into the THUMP domain; it reads ELFAERLAHI…RDKLYMVSQR (105 aa). ATP is bound by residues 185–186, lysine 267, glycine 289, and glutamine 298; that span reads LI. A disulfide bridge connects residues cysteine 346 and cysteine 458. Residues 406 to 484 form the Rhodanese domain; the sequence is AAGNEVIIDI…GYNNVKVYRP (79 aa). Cysteine 458 (cysteine persulfide intermediate) is an active-site residue.

Belongs to the ThiI family.

It is found in the cytoplasm. The enzyme catalyses [ThiI sulfur-carrier protein]-S-sulfanyl-L-cysteine + a uridine in tRNA + 2 reduced [2Fe-2S]-[ferredoxin] + ATP + H(+) = [ThiI sulfur-carrier protein]-L-cysteine + a 4-thiouridine in tRNA + 2 oxidized [2Fe-2S]-[ferredoxin] + AMP + diphosphate. It carries out the reaction [ThiS sulfur-carrier protein]-C-terminal Gly-Gly-AMP + S-sulfanyl-L-cysteinyl-[cysteine desulfurase] + AH2 = [ThiS sulfur-carrier protein]-C-terminal-Gly-aminoethanethioate + L-cysteinyl-[cysteine desulfurase] + A + AMP + 2 H(+). The protein operates within cofactor biosynthesis; thiamine diphosphate biosynthesis. In terms of biological role, catalyzes the ATP-dependent transfer of a sulfur to tRNA to produce 4-thiouridine in position 8 of tRNAs, which functions as a near-UV photosensor. Also catalyzes the transfer of sulfur to the sulfur carrier protein ThiS, forming ThiS-thiocarboxylate. This is a step in the synthesis of thiazole, in the thiamine biosynthesis pathway. The sulfur is donated as persulfide by IscS. This Shewanella amazonensis (strain ATCC BAA-1098 / SB2B) protein is tRNA sulfurtransferase.